The sequence spans 269 residues: Formamidopyrimidine-DNA glycosylase (269 aa).

The Schiff-base intermediate with DNA role is filled by Pro2. Glu3 acts as the Proton donor in catalysis. The active-site Proton donor; for beta-elimination activity is Lys57. His90, Arg109, and Lys150 together coordinate DNA. Residues 235–269 (QVYGRHGEPCYTCGEFIQIAKYGQRSSFFCPSCQN) form an FPG-type zinc finger. Arg259 acts as the Proton donor; for delta-elimination activity in catalysis.

It belongs to the FPG family. In terms of assembly, monomer. Requires Zn(2+) as cofactor.

It carries out the reaction Hydrolysis of DNA containing ring-opened 7-methylguanine residues, releasing 2,6-diamino-4-hydroxy-5-(N-methyl)formamidopyrimidine.. The enzyme catalyses 2'-deoxyribonucleotide-(2'-deoxyribose 5'-phosphate)-2'-deoxyribonucleotide-DNA = a 3'-end 2'-deoxyribonucleotide-(2,3-dehydro-2,3-deoxyribose 5'-phosphate)-DNA + a 5'-end 5'-phospho-2'-deoxyribonucleoside-DNA + H(+). Its function is as follows. Involved in base excision repair of DNA damaged by oxidation or by mutagenic agents. Acts as a DNA glycosylase that recognizes and removes damaged bases. Has a preference for oxidized purines, such as 7,8-dihydro-8-oxoguanine (8-oxoG). Has AP (apurinic/apyrimidinic) lyase activity and introduces nicks in the DNA strand. Cleaves the DNA backbone by beta-delta elimination to generate a single-strand break at the site of the removed base with both 3'- and 5'-phosphates. The polypeptide is Formamidopyrimidine-DNA glycosylase (Baumannia cicadellinicola subsp. Homalodisca coagulata).